The primary structure comprises 434 residues: uncharacterized protein (434 aa).

The N-terminal stretch at 1 to 17 (MTFLLFQLLVLLRYSIG) is a signal peptide. 12 consecutive transmembrane segments (helical) span residues 48–68 (AAISLDFIFIVFPMLLFFTVL), 70–90 (EWVYHGTGLLSLLVLILSVTA), 112–132 (YRVALMLITCLCILAVDFTIF), 141–161 (TYGTSLMDLGVGSFVLANAVV), 173–193 (WITGIKATAPLLLLGFIRLVT), 206–226 (YGVHWNFFFTLAAISILTSFV), 232–252 (YCGLLGFAVLAGYQTWLLSGL), 271–291 (EGVYSILGYWGMYLLGVHLGY), 305–325 (TSSIARVFLVSLLLWIVTILF), 344–364 (WVLAQDLQALGIFMLSSYIPL), 380–400 (ATFLLANLVTGMVNLTVDTIF), and 404–424 (FSSLLILTAYAFALSAIIGTI).

It localises to the membrane. This is an uncharacterized protein from Arabidopsis thaliana (Mouse-ear cress).